The chain runs to 594 residues: Estrogen receptor (594 aa).

The interval 1–184 (MTMTLHTKAS…AMESAKETRY (184 aa)) is modulating (transactivation AF-1); mediates interaction with MACROD1. O-linked (GlcNAc) serine glycosylation occurs at S10. A required for interaction with NCOA1 region spans residues 35–47 (LERPLGEVYVESS). The tract at residues 35-174 (LERPLGEVYV…LASSGDKGSM (140 aa)) is interaction with DDX5; self-association. Residues S104 and S106 each carry the phosphoserine; by CDK2 modification. The residue at position 118 (S118) is a Phosphoserine. The disordered stretch occupies residues 152–173 (PNADNRRQGGRERLASSGDKGS). The segment covering 154 to 165 (ADNRRQGGRERL) has biased composition (basic and acidic residues). The residue at position 167 (S167) is a Phosphoserine; by CK2. 2 NR C4-type zinc fingers span residues 185 to 205 (CAVCNDYASGYHYGVWSCEGC) and 221 to 245 (CPATNQCTIDKNRRKSCQACRLRKC). The nuclear receptor DNA-binding region spans 185–250 (CAVCNDYASG…RLRKCYEVGM (66 aa)). A mediates interaction with DNTTIP2 region spans residues 185 to 310 (CAVCNDYASG…TKKISPVLSL (126 aa)). The tract at residues 251–310 (MKGGIRKDRRGGRMLKHKRQRDDGEGRNEAGPSGDRRPANFWPSPLLIKHTKKISPVLSL) is hinge. The span at 257-269 (KDRRGGRMLKHKR) shows a compositional bias: basic residues. The segment at 257-293 (KDRRGGRMLKHKRQRDDGEGRNEAGPSGDRRPANFWP) is disordered. R260 bears the Asymmetric dimethylarginine; by PRMT1 mark. The tract at residues 262–594 (GRMLKHKRQR…GEAEGFPNTI (333 aa)) is interaction with AKAP13. The tract at residues 264-594 (MLKHKRQRDD…GEAEGFPNTI (331 aa)) is self-association. Over residues 270–288 (QRDDGEGRNEAGPSGDRRP) the composition is skewed to basic and acidic residues. One can recognise an NR LBD domain in the interval 311-546 (TAEQMISALL…DLLLEMLDAH (236 aa)). Positions 311 to 594 (TAEQMISALL…GEAEGFPNTI (284 aa)) are transactivation AF-2. E353 and R394 together coordinate 17beta-estradiol. The S-palmitoyl cysteine moiety is linked to residue C447. H523 contacts 17beta-estradiol. Y536 carries the phosphotyrosine; by Tyr-kinases modification. The tract at residues 551–575 (PANHGGAPMEETNQSQLATTGSTSP) is disordered. Positions 561–575 (ETNQSQLATTGSTSP) are enriched in polar residues. O-linked (GlcNAc) threonine glycosylation is present at T570.

Belongs to the nuclear hormone receptor family. NR3 subfamily. In terms of assembly, binds DNA as a homodimer. Can form a heterodimer with ESR2. Interacts with coactivator NCOA5. Interacts with PELP1, the interaction is enhanced by 17-beta-estradiol; the interaction increases ESR1 transcriptional activity. Interacts with NCOA7; the interaction is ligand-inducible. Interacts with AKAP13, CUEDC2, HEXIM1, KDM5A, MAP1S, SMARD1, and UBE1C. Interacts with MUC1; the interaction is stimulated by 7 beta-estradiol (E2) and enhances ESR1-mediated transcription. Interacts with DNTTIP2, and UIMC1. Interacts with KMT2D/MLL2. Interacts with ATAD2; the interaction is enhanced by estradiol. Interacts with KIF18A and LDB1. Interacts with RLIM (via its C-terminus). Interacts with MACROD1. Interacts with SH2D4A and PLCG. Interacts with SH2D4A; the interaction blocks binding to PLCG and inhibits estrogen-induced cell proliferation. Interacts with DYNLL1. Interacts with CCDC62; the interaction requires estradiol and appears to enhance the transcription of target genes. Interacts with NR2C1; the interaction prevents homodimerization of ESR1 and suppresses its transcriptional activity and cell growth. Interacts with DNAAF4. Interacts with PRMT2. Interacts with RBFOX2. Interacts with EP300; the interaction is estrogen-dependent and enhanced by CITED1. Interacts with CITED1; the interaction is estrogen-dependent. Interacts with FAM120B, FOXL2, PHB2 and SLC30A9. Interacts with coactivators NCOA3 and NCOA6. Interacts with STK3/MST2 only in the presence of SAV1 and vice-versa. Binds to CSNK1D. Interacts with NCOA2; NCOA2 can interact with ESR1 AF-1 and AF-2 domains simultaneously and mediate their transcriptional synergy. Interacts with DDX5. Interacts with NCOA1; the interaction seems to require a self-association of N-terminal and C-terminal regions. Interacts with ZNF366, DDX17, NFKB1, RELA, SP1 and SP3. Interacts with NRIP1. Interacts with GPER1; the interaction occurs in an estrogen-dependent manner. Interacts with CLOCK and the interaction is stimulated by estrogen. Interacts with TRIP4 (ufmylated); estrogen dependent. Interacts with LMTK3; the interaction phosphorylates ESR1 (in vitro) and protects it against proteasomal degradation. Interacts with CCAR2 (via N-terminus) in a ligand-independent manner. Interacts with ZFHX3. Interacts with SFR1 in a ligand-dependent and -independent manner. Interacts with DCAF13, LATS1 and DCAF1; regulates ESR1 ubiquitination and ubiquitin-mediated proteasomal degradation. Interacts (via DNA-binding domain) with POU4F2 (C-terminus); this interaction increases the estrogen receptor ESR1 transcriptional activity in a DNA- and ligand 17-beta-estradiol-independent manner. Interacts with ESRRB isoform 1. Interacts with UBE3A and WBP2. Interacts with GTF2B. Interacts with RBM39. In the absence of hormonal ligand, interacts with TACC1. Interacts with PI3KR1 or PI3KR2 and PTK2/FAK1. Interacts with SRC. Interacts with BAG1; the interaction is promoted in the absence of estradiol (17-beta-estradiol/E2). Interacts with and ubiquitinated by STUB1; the interaction is promoted in the absence of estradiol (17-beta-estradiol/E2). Interacts with NEDD8. In terms of processing, ubiquitinated; regulated by LATS1 via DCAF1 it leads to ESR1 proteasomal degradation. Deubiquitinated by OTUB1. Ubiquitinated by STUB1/CHIP; in the CA1 hippocampal region following loss of endogenous circulating estradiol (17-beta-estradiol/E2). Ubiquitinated by UBR5, leading to its degradation: UBR5 specifically recognizes and binds ligand-bound ESR1 when it is not associated with coactivators (NCOAs). In presence of NCOAs, the UBR5-degron is not accessible, preventing its ubiquitination and degradation. Post-translationally, phosphorylated by cyclin A/CDK2 and CK1. Phosphorylation probably enhances transcriptional activity. Dephosphorylation at Ser-118 by PPP5C inhibits its transactivation activity. Phosphorylated by LMTK3 (in vitro). Palmitoylated at Cys-447 by ZDHHC7 and ZDHHC21. Palmitoylation is required for plasma membrane targeting and for rapid intracellular signaling via ERK and AKT kinases and cAMP generation, but not for signaling mediated by the nuclear hormone receptor. In terms of processing, dimethylated by PRMT1 at Arg-260. The methylation may favor cytoplasmic localization. Demethylated by JMJD6 at Arg-260.

The protein resides in the nucleus. The protein localises to the cytoplasm. It localises to the golgi apparatus. It is found in the cell membrane. Functionally, nuclear hormone receptor. The steroid hormones and their receptors are involved in the regulation of eukaryotic gene expression and affect cellular proliferation and differentiation in target tissues. Ligand-dependent nuclear transactivation involves either direct homodimer binding to a palindromic estrogen response element (ERE) sequence or association with other DNA-binding transcription factors, such as AP-1/c-Jun, c-Fos, ATF-2, Sp1 and Sp3, to mediate ERE-independent signaling. Ligand binding induces a conformational change allowing subsequent or combinatorial association with multiprotein coactivator complexes through LXXLL motifs of their respective components. Mutual transrepression occurs between the estrogen receptor (ER) and NF-kappa-B in a cell-type specific manner. Decreases NF-kappa-B DNA-binding activity and inhibits NF-kappa-B-mediated transcription from the IL6 promoter and displace RELA/p65 and associated coregulators from the promoter. Recruited to the NF-kappa-B response element of the CCL2 and IL8 promoters and can displace CREBBP. Present with NF-kappa-B components RELA/p65 and NFKB1/p50 on ERE sequences. Can also act synergistically with NF-kappa-B to activate transcription involving respective recruitment adjacent response elements; the function involves CREBBP. Can activate the transcriptional activity of TFF1. Also mediates membrane-initiated estrogen signaling involving various kinase cascades. Essential for MTA1-mediated transcriptional regulation of BRCA1 and BCAS3. Maintains neuronal survival in response to ischemic reperfusion injury when in the presence of circulating estradiol (17-beta-estradiol/E2). The polypeptide is Estrogen receptor (ESR1) (Equus caballus (Horse)).